Reading from the N-terminus, the 407-residue chain is Nuclear hormone receptor family member nhr-86 (407 aa).

Positions 21–96 (KSTCSICRED…VGMNPAGVQQ (76 aa)) form a DNA-binding region, nuclear receptor. 2 consecutive NR C4-type zinc fingers follow at residues 24–44 (CSIC…CRAC) and 60–79 (CRGN…CRSC). Residues 130-405 (AQSALVEDLH…KDFYDLVNGK (276 aa)) form the NR LBD domain. The segment at 394-405 (PPKDFYDLVNGK) is AF-2.

Belongs to the nuclear hormone receptor family. As to expression, expressed in intestinal epithelial cells, excretory gland cells and in several head neurons.

Its subcellular location is the nucleus. Its function is as follows. Nuclear receptor which acts as a transcription activator. Binds small molecule ligands, such as phenazine 1-carboxamide (PCN), a pathogen-derived metabolite, leading to modulation of innate immune responses against virulent pathogens. On exposure to exogenous PCN, P.aeruginosa and other xenobiotic immunostimulant such as R24, activates immune response genes, including irg-4, irg-5, mul-1, drd-50, cyp-35C1 and ugt-30, probably via direct interaction with their promoters, and independent of the p38 MAPK pmk-1 pathway. Exhibits higher affinity to R24 than PCN and thus induces stronger immune response. Binds its own promoter thereby autoregulating its expression in the head hypodermis and the pharynx. Possibly plays a role in lipid storage or catabolism. This Caenorhabditis elegans protein is Nuclear hormone receptor family member nhr-86 (nhr-86).